We begin with the raw amino-acid sequence, 230 residues long: Cytochrome c-552 (230 aa).

An N-terminal signal peptide occupies residues 1 to 47; it reads MTTYLSQDRLRNKENDTMTYQHSKMYQSRTFLLFSALLLVAGQASAA. Heme c-binding residues include cysteine 63, cysteine 66, histidine 67, cysteine 166, cysteine 169, and histidine 170.

Post-translationally, binds 2 heme c groups covalently per subunit.

It localises to the periplasm. Functionally, diheme, high potential cytochrome c. The sequence is that of Cytochrome c-552 (cyc1) from Acidithiobacillus ferridurans.